Here is a 221-residue protein sequence, read N- to C-terminus: Oligoribonuclease (221 aa).

Residues Leu21–Leu186 form the Exonuclease domain. Residue Tyr143 is part of the active site.

It belongs to the oligoribonuclease family.

The protein localises to the cytoplasm. In terms of biological role, 3'-to-5' exoribonuclease specific for small oligoribonucleotides. In Corynebacterium efficiens (strain DSM 44549 / YS-314 / AJ 12310 / JCM 11189 / NBRC 100395), this protein is Oligoribonuclease.